Reading from the N-terminus, the 86-residue chain is Large ribosomal subunit protein eL43 (86 aa).

Residues 38 to 60 form a C4-type zinc finger; the sequence is CPFCGHKGKVYRLSTGVWACKKC.

The protein belongs to the eukaryotic ribosomal protein eL43 family. Zn(2+) serves as cofactor.

The chain is Large ribosomal subunit protein eL43 from Desulfurococcus amylolyticus (strain DSM 18924 / JCM 16383 / VKM B-2413 / 1221n) (Desulfurococcus kamchatkensis).